The following is a 184-amino-acid chain: Guanylate kinase (184 aa).

The Guanylate kinase-like domain maps to 4-182 (MGLTVLSGPS…AAARLVALMI (179 aa)). Residue 11–18 (GPSGVGKD) coordinates ATP.

The protein belongs to the guanylate kinase family.

It is found in the cytoplasm. It carries out the reaction GMP + ATP = GDP + ADP. Essential for recycling GMP and indirectly, cGMP. This is Guanylate kinase from Frankia casuarinae (strain DSM 45818 / CECT 9043 / HFP020203 / CcI3).